Reading from the N-terminus, the 574-residue chain is Laccase-12 (574 aa).

The N-terminal stretch at Met-1–Ala-27 is a signal peptide. 2 consecutive Plastocyanin-like domains span residues Asp-35 to Gly-151 and Glu-161 to Pro-314. N-linked (GlcNAc...) asparagine glycosylation occurs at Asn-81. 4 residues coordinate Cu cation: His-85, His-87, His-130, and His-132. N-linked (GlcNAc...) asparagine glycosylation is found at Asn-173, Asn-190, Asn-206, Asn-242, Asn-302, Asn-335, Asn-342, Asn-381, Asn-388, Asn-398, Asn-434, Asn-441, and Asn-447. Residues Asn-424–Ser-558 form the Plastocyanin-like 3 domain. Residues His-475, His-478, His-480, His-537, Cys-538, His-539, and His-543 each contribute to the Cu cation site.

This sequence belongs to the multicopper oxidase family. Cu cation is required as a cofactor.

It is found in the secreted. The protein resides in the extracellular space. Its subcellular location is the apoplast. The catalysed reaction is 4 hydroquinone + O2 = 4 benzosemiquinone + 2 H2O. Its function is as follows. Lignin degradation and detoxification of lignin-derived products. This is Laccase-12 (LAC12) from Oryza sativa subsp. japonica (Rice).